Reading from the N-terminus, the 556-residue chain is Membrane protein insertase YidC (556 aa).

The next 5 helical transmembrane spans lie at 6-26 (IVLY…WQID), 332-352 (LDLT…FSLM), 358-378 (VVGN…LAFY), 428-448 (LGGC…YWVL), and 501-521 (VMMF…SGLV).

Belongs to the OXA1/ALB3/YidC family. Type 1 subfamily. Interacts with the Sec translocase complex via SecD. Specifically interacts with transmembrane segments of nascent integral membrane proteins during membrane integration.

The protein localises to the cell inner membrane. Functionally, required for the insertion and/or proper folding and/or complex formation of integral membrane proteins into the membrane. Involved in integration of membrane proteins that insert both dependently and independently of the Sec translocase complex, as well as at least some lipoproteins. Aids folding of multispanning membrane proteins. The sequence is that of Membrane protein insertase YidC from Legionella pneumophila (strain Corby).